Here is a 378-residue protein sequence, read N- to C-terminus: Nitronate monooxygenase (378 aa).

Positions 1 to 15 are excised as a propeptide; sequence MHFPGHSSKKEESAQ. An FMN-binding site is contributed by 37–39; sequence PMY. His196 serves as the catalytic Proton acceptor. Substrate is bound at residue His196. FMN is bound by residues 229-231 and 252-253; these read AGG and GT.

This sequence belongs to the nitronate monooxygenase family. NMO class II subfamily. As to quaternary structure, homodimer. FMN is required as a cofactor.

It carries out the reaction ethylnitronate + O2 = chemical entity + acetaldehyde + nitrite + H(+). Catalyzes the oxidation of alkyl nitronates to produce the corresponding carbonyl compounds and nitrites. Anionic forms of nitroalkanes are much better substrates than are neutral forms. The protein is Nitronate monooxygenase (ncd-2) of Neurospora crassa (strain ATCC 24698 / 74-OR23-1A / CBS 708.71 / DSM 1257 / FGSC 987).